A 509-amino-acid chain; its full sequence is Tyrosine-protein kinase Lck (509 aa).

Gly-2 carries N-myristoyl glycine lipidation. An interactions with CD4 and CD8 region spans residues 2–72 (GCGCSSHPED…DNLVIALHSY (71 aa)). S-palmitoyl cysteine attachment occurs at residues Cys-3 and Cys-5. In terms of domain architecture, SH3 spans 61 to 121 (LQDNLVIALH…PFNFVAKANS (61 aa)). Residue Lys-99 forms a Glycyl lysine isopeptide (Lys-Gly) (interchain with G-Cter in ubiquitin) linkage. Ser-102 carries the phosphoserine modification. The region spanning 127–224 (WFFKNLSRKD…GLCTRLSRPC (98 aa)) is the SH2 domain. The interaction with PTPRH stretch occupies residues 154 to 242 (RESESTAGSF…WWEDEWEVPR (89 aa)). Thr-159 bears the Phosphothreonine mark. A Phosphoserine modification is found at Ser-162. Tyr-192 carries the post-translational modification Phosphotyrosine. The residue at position 194 (Ser-194) is a Phosphoserine. The 254-residue stretch at 245–498 (LKLVERLGAG…YLRSVLEDFF (254 aa)) folds into the Protein kinase domain. ATP-binding positions include 251 to 259 (LGAGQFGEV) and Lys-273. Lys-276 participates in a covalent cross-link: Glycyl lysine isopeptide (Lys-Gly) (interchain with G-Cter in ubiquitin). Residue Asp-364 is the Proton acceptor of the active site. Position 394 is a phosphotyrosine; by autocatalysis (Tyr-394). Tyr-505 is subject to Phosphotyrosine; by CSK.

It belongs to the protein kinase superfamily. Tyr protein kinase family. SRC subfamily. In terms of assembly, binds to the cytoplasmic domain of cell surface receptors, such as AXL, CD2, CD4, CD5, CD8, CD44, CD45 and CD122. Also binds to effector molecules, such as PI4K, VAV1, RASA1, FYB1 and to other protein kinases including CDK1, RAF1, ZAP70 and SYK. Binds to phosphatidylinositol 3'-kinase (PI3K) from T-lymphocytes through its SH3 domain and to the tyrosine phosphorylated form of KHDRBS1/p70 through its SH2 domain. This interaction inhibits its tyrosine-kinase activity. Interacts with SQSTM1. Interacts with phosphorylated LIME1. Interacts with CBLB and PTPRH. Interacts with RUNX3. Forms a signaling complex with EPHA1, PTK2B and PI3-KINASE; upon activation by EFNA1 which may regulate T-lymphocyte migration. Associates with ZAP70 and RHOH; these interactions allow LCK-mediated RHOH and CD3 subunit phosphorylation in the presence of functional ZAP70. Interacts with UNC119; this interaction plays a crucial role in activation of LCK. Interacts with CEACAM1 (via cytoplasmic domain); mediates CEACAM1 phosphorylation resulting in PTPN6 recruitment that dephosphorylates TCR stimulation-induced CD247 and ZAP70. Interacts with CD160. Interacts with CD48. As to quaternary structure, (Microbial infection) Interacts with herpes simplex virus 1 UL46; this interaction activates LCK. (Microbial infection) Interacts with HIV-1 Nef through its SH3 domain. In terms of processing, autophosphorylated on Tyr-394, increasing enzymatic activity, this site is dephosphorylated by PTN22. Phosphorylated on Tyr-505 by CSK, decreasing activity. Dephosphorylated by PTPRC/CD45. Dephosphorylation at Tyr-394 by PTPN2 negatively regulates T-cell receptor signaling. Dephosphorylation at Tyr-394 by DUSP22 negatively regulates T-cell receptor signaling. Post-translationally, myristoylation is required prior to palmitoylation. Palmitoylation regulates association with the plasma membrane and could be mediated by ZDHHC2. In terms of processing, 'Lys-63'-linked ubiquitinated at Lys-99 and Lys-276 by UBR2; this modification is required for autophosphorylation at Tyr-394. As to expression, expressed specifically in lymphoid cells.

The protein localises to the cell membrane. It is found in the cytoplasm. It localises to the cytosol. The catalysed reaction is L-tyrosyl-[protein] + ATP = O-phospho-L-tyrosyl-[protein] + ADP + H(+). The relative activities of the inhibitory tyrosine-protein kinase CSK and the activating tyrosine-protein phosphatase PTPRC/CD45 determine the level of LCK activity. These interactions allow rapid and efficient activation of LCK in response to TCR stimulation. Its function is as follows. Non-receptor tyrosine-protein kinase that plays an essential role in the selection and maturation of developing T-cells in the thymus and in the function of mature T-cells. Plays a key role in T-cell antigen receptor (TCR)-linked signal transduction pathways. Constitutively associated with the cytoplasmic portions of the CD4 and CD8 surface receptors. Association of the TCR with a peptide antigen-bound MHC complex facilitates the interaction of CD4 and CD8 with MHC class II and class I molecules, respectively, thereby recruiting the associated LCK protein to the vicinity of the TCR/CD3 complex. LCK then phosphorylates tyrosine residues within the immunoreceptor tyrosine-based activation motifs (ITAM) of the cytoplasmic tails of the TCR-gamma chains and CD3 subunits, initiating the TCR/CD3 signaling pathway. Once stimulated, the TCR recruits the tyrosine kinase ZAP70, that becomes phosphorylated and activated by LCK. Following this, a large number of signaling molecules are recruited, ultimately leading to lymphokine production. LCK also contributes to signaling by other receptor molecules. Associates directly with the cytoplasmic tail of CD2, which leads to hyperphosphorylation and activation of LCK. Also plays a role in the IL2 receptor-linked signaling pathway that controls the T-cell proliferative response. Binding of IL2 to its receptor results in increased activity of LCK. Is expressed at all stages of thymocyte development and is required for the regulation of maturation events that are governed by both pre-TCR and mature alpha beta TCR. Phosphorylates other substrates including RUNX3, PTK2B/PYK2, the microtubule-associated protein MAPT, RHOH or TYROBP. Interacts with FYB2. In Homo sapiens (Human), this protein is Tyrosine-protein kinase Lck (LCK).